The sequence spans 406 residues: Arginine biosynthesis bifunctional protein ArgJ (406 aa).

Positions 156, 182, 193, 279, 401, and 406 each coordinate substrate. Residue Thr193 is the Nucleophile of the active site.

Belongs to the ArgJ family. In terms of assembly, heterotetramer of two alpha and two beta chains.

The protein resides in the cytoplasm. It carries out the reaction N(2)-acetyl-L-ornithine + L-glutamate = N-acetyl-L-glutamate + L-ornithine. The catalysed reaction is L-glutamate + acetyl-CoA = N-acetyl-L-glutamate + CoA + H(+). Its pathway is amino-acid biosynthesis; L-arginine biosynthesis; L-ornithine and N-acetyl-L-glutamate from L-glutamate and N(2)-acetyl-L-ornithine (cyclic): step 1/1. It participates in amino-acid biosynthesis; L-arginine biosynthesis; N(2)-acetyl-L-ornithine from L-glutamate: step 1/4. In terms of biological role, catalyzes two activities which are involved in the cyclic version of arginine biosynthesis: the synthesis of N-acetylglutamate from glutamate and acetyl-CoA as the acetyl donor, and of ornithine by transacetylation between N(2)-acetylornithine and glutamate. This is Arginine biosynthesis bifunctional protein ArgJ from Bacillus licheniformis (strain ATCC 14580 / DSM 13 / JCM 2505 / CCUG 7422 / NBRC 12200 / NCIMB 9375 / NCTC 10341 / NRRL NRS-1264 / Gibson 46).